The chain runs to 151 residues: Large ribosomal subunit protein uL15 (151 aa).

This sequence belongs to the universal ribosomal protein uL15 family. Part of the 50S ribosomal subunit.

Functionally, binds to the 23S rRNA. The chain is Large ribosomal subunit protein uL15 from Hyperthermus butylicus (strain DSM 5456 / JCM 9403 / PLM1-5).